Here is a 105-residue protein sequence, read N- to C-terminus: Nitrogenase-stabilizing/protective protein NifW 2 (105 aa).

It belongs to the NifW family.

Its function is as follows. May protect the nitrogenase Fe-Mo protein from oxidative damage. The chain is Nitrogenase-stabilizing/protective protein NifW 2 (nifW2) from Trichormus variabilis (strain ATCC 29413 / PCC 7937) (Anabaena variabilis).